A 285-amino-acid polypeptide reads, in one-letter code: Meiotically up-regulated gene 74 protein (285 aa).

It localises to the cytoplasm. Functionally, has a role in meiosis. This chain is Meiotically up-regulated gene 74 protein (mug74), found in Schizosaccharomyces pombe (strain 972 / ATCC 24843) (Fission yeast).